The primary structure comprises 249 residues: Triosephosphate isomerase (249 aa).

Residue asparagine 9–lysine 11 coordinates substrate. Catalysis depends on histidine 94, which acts as the Electrophile. The active-site Proton acceptor is the glutamate 166. Substrate-binding positions include glycine 172, serine 214, and glycine 235–glycine 236.

The protein belongs to the triosephosphate isomerase family. Homodimer.

The protein localises to the cytoplasm. The enzyme catalyses D-glyceraldehyde 3-phosphate = dihydroxyacetone phosphate. Its pathway is carbohydrate biosynthesis; gluconeogenesis. It functions in the pathway carbohydrate degradation; glycolysis; D-glyceraldehyde 3-phosphate from glycerone phosphate: step 1/1. Functionally, involved in the gluconeogenesis. Catalyzes stereospecifically the conversion of dihydroxyacetone phosphate (DHAP) to D-glyceraldehyde-3-phosphate (G3P). The chain is Triosephosphate isomerase from Leptospira biflexa serovar Patoc (strain Patoc 1 / Ames).